A 173-amino-acid chain; its full sequence is 3-hydroxydecanoyl-[acyl-carrier-protein] dehydratase (173 aa).

Residue histidine 71 is part of the active site.

It belongs to the thioester dehydratase family. FabA subfamily. Homodimer.

Its subcellular location is the cytoplasm. It carries out the reaction a (3R)-hydroxyacyl-[ACP] = a (2E)-enoyl-[ACP] + H2O. It catalyses the reaction (3R)-hydroxydecanoyl-[ACP] = (2E)-decenoyl-[ACP] + H2O. The enzyme catalyses (2E)-decenoyl-[ACP] = (3Z)-decenoyl-[ACP]. The protein operates within lipid metabolism; fatty acid biosynthesis. Functionally, necessary for the introduction of cis unsaturation into fatty acids. Catalyzes the dehydration of (3R)-3-hydroxydecanoyl-ACP to E-(2)-decenoyl-ACP and then its isomerization to Z-(3)-decenoyl-ACP. Can catalyze the dehydratase reaction for beta-hydroxyacyl-ACPs with saturated chain lengths up to 16:0, being most active on intermediate chain length. In Bradyrhizobium sp. (strain BTAi1 / ATCC BAA-1182), this protein is 3-hydroxydecanoyl-[acyl-carrier-protein] dehydratase.